Consider the following 219-residue polypeptide: Large ribosomal subunit protein bL25 (219 aa).

The disordered stretch occupies residues 188–219 (TVAAPADTAVQPESSSTKGKKDEDGALAKDKK). Residues 206–219 (GKKDEDGALAKDKK) show a composition bias toward basic and acidic residues.

It belongs to the bacterial ribosomal protein bL25 family. CTC subfamily. Part of the 50S ribosomal subunit; part of the 5S rRNA/L5/L18/L25 subcomplex. Contacts the 5S rRNA. Binds to the 5S rRNA independently of L5 and L18.

This is one of the proteins that binds to the 5S RNA in the ribosome where it forms part of the central protuberance. This is Large ribosomal subunit protein bL25 from Elusimicrobium minutum (strain Pei191).